Reading from the N-terminus, the 468-residue chain is Uronate isomerase (468 aa).

It belongs to the metallo-dependent hydrolases superfamily. Uronate isomerase family.

The enzyme catalyses D-glucuronate = D-fructuronate. It carries out the reaction aldehydo-D-galacturonate = keto-D-tagaturonate. Its pathway is carbohydrate metabolism; pentose and glucuronate interconversion. This is Uronate isomerase from Endomicrobium trichonymphae.